The primary structure comprises 639 residues: Elongation factor 4 (639 aa).

The tr-type G domain maps to 39-221 (TMIRNFCIIA…EIVRRVPAPV (183 aa)). GTP contacts are provided by residues 51–56 (DHGKST) and 168–171 (NKID).

The protein belongs to the TRAFAC class translation factor GTPase superfamily. Classic translation factor GTPase family. LepA subfamily.

The protein resides in the cell membrane. The catalysed reaction is GTP + H2O = GDP + phosphate + H(+). In terms of biological role, required for accurate and efficient protein synthesis under certain stress conditions. May act as a fidelity factor of the translation reaction, by catalyzing a one-codon backward translocation of tRNAs on improperly translocated ribosomes. Back-translocation proceeds from a post-translocation (POST) complex to a pre-translocation (PRE) complex, thus giving elongation factor G a second chance to translocate the tRNAs correctly. Binds to ribosomes in a GTP-dependent manner. In Frankia casuarinae (strain DSM 45818 / CECT 9043 / HFP020203 / CcI3), this protein is Elongation factor 4.